The chain runs to 394 residues: HORMA domain-containing protein 1 (394 aa).

The 203-residue stretch at 24 to 226 (QQSLVLVKRL…TPFHTFKVKV (203 aa)) folds into the HORMA domain. Positions 306–394 (KESPELSISH…RKFSEPKEHI (89 aa)) are disordered. A compositionally biased stretch (polar residues) spans 311–325 (LSISHSQVEQLVSKT). A compositionally biased stretch (basic and acidic residues) spans 353–362 (KSKESRKRSQ). Residue Ser376 is modified to Phosphoserine. The Nuclear localization signal signature appears at 383-386 (KRRK).

In terms of assembly, interacts with HORMAD2. Interacts with IHO1. Post-translationally, phosphorylated at Ser-377 in a SPO11-dependent manner.

It localises to the nucleus. Its subcellular location is the chromosome. Its function is as follows. Plays a key role in meiotic progression. Regulates 3 different functions during meiosis: ensures that sufficient numbers of processed DNA double-strand breaks (DSBs) are available for successful homology search by increasing the steady-state numbers of single-stranded DSB ends. Promotes synaptonemal-complex formation independently of its role in homology search. Plays a key role in the male mid-pachytene checkpoint and the female meiotic prophase checkpoint: required for efficient build-up of ATR activity on unsynapsed chromosome regions, a process believed to form the basis of meiotic silencing of unsynapsed chromatin (MSUC) and meiotic prophase quality control in both sexes. The protein is HORMA domain-containing protein 1 (HORMAD1) of Sus scrofa (Pig).